Consider the following 60-residue polypeptide: Large ribosomal subunit protein uL30 (60 aa).

Belongs to the universal ribosomal protein uL30 family. In terms of assembly, part of the 50S ribosomal subunit.

The polypeptide is Large ribosomal subunit protein uL30 (Polaromonas naphthalenivorans (strain CJ2)).